We begin with the raw amino-acid sequence, 488 residues long: Beta-1,3-glucan-binding protein (488 aa).

The first 17 residues, 1–17, serve as a signal peptide directing secretion; that stretch reads MFVTFICFLACLTCSYG. Residues 18-135 are binds to curdlan, laminarihexaose and laminarin. The complex formation with laminarin induces self-association of the complexes into a macro structure, likely containing six protein and three laminarin molecules. The macro structures may form a platform on a microbial surface for recruitment of downstream proteases, as a means of amplification of the initial signal of pathogen recognition for the activation of the phenoloxidase cascade; the sequence is QPRAQQYVVP…GTPADTSLEP (118 aa). A binds to curdlan, lipopolysaccharide and lipoteichoic acid, activates the phenoloxidase cascade and is resistant to proteolytic degradation by trypsin or chymotrypsin, but is not as effective as the full-length protein in aggregation of microorganisms region spans residues 18–198; that stretch reads QPRAQQYVVP…LKDLANWEAE (181 aa). The CBM39 domain maps to 24-123; that stretch reads YVVPSAKLEA…GEWTVTEFVN (100 aa). Residues 24–127 are binds to laminarihexaose and laminarin; the sequence is YVVPSAKLEA…VTEFVNEDGT (104 aa). Substrate contacts are provided by residues D72, 99–101, and R110; that span reads WTY. The interval 125–158 is disordered; it reads DGTPADTSLEPTTAPTPVRPDQPNQPIPTHRPDP. A compositionally biased stretch (polar residues) spans 129–139; that stretch reads ADTSLEPTTAP. Residues 141–150 are compositionally biased toward pro residues; sequence PVRPDQPNQP. The GH16 domain occupies 144–488; it reads PDQPNQPIPT…KVDYVRVYAL (345 aa). The interval 199-488 is binds to laminarin, but not to curdlan, does not activate the phenoloxidase cascade, is susceptible to proteinase digestion by trypsin or chymotrypsin and does not cause aggregation of microorganisms; the sequence is VKFPEEPDYP…KVDYVRVYAL (290 aa). N-linked (GlcNAc...) asparagine glycosylation is found at N373 and N453.

The protein belongs to the insect beta-1,3-glucan binding protein family. In terms of assembly, monomer. In terms of processing, the N-terminus is blocked. In terms of tissue distribution, fat body and hemolymph.

The protein resides in the secreted. Its function is as follows. Involved in the recognition of invading microorganisms causing their aggregation. Activates the phenoloxidase cascade. Binds specifically to beta-1,3-glucan. Binds to curdlan, a linear water-insoluble beta-1,3-glucan polysaccharide, and to laminarin, a water-soluble beta-1,3-glucan polysaccharide containing beta-1,6 branches. Also binds to lipopolysaccharide and lipoteichoic acid. This chain is Beta-1,3-glucan-binding protein, found in Plodia interpunctella (Indianmeal moth).